Consider the following 207-residue polypeptide: Ribosomal RNA small subunit methyltransferase G (207 aa).

S-adenosyl-L-methionine is bound by residues glycine 74, leucine 79, 125–126 (VE), and arginine 140.

The protein belongs to the methyltransferase superfamily. RNA methyltransferase RsmG family.

It localises to the cytoplasm. The catalysed reaction is guanosine(527) in 16S rRNA + S-adenosyl-L-methionine = N(7)-methylguanosine(527) in 16S rRNA + S-adenosyl-L-homocysteine. Functionally, specifically methylates the N7 position of guanine in position 527 of 16S rRNA. This is Ribosomal RNA small subunit methyltransferase G from Shewanella halifaxensis (strain HAW-EB4).